Consider the following 668-residue polypeptide: MPPPETSSAAAPSPPSPDPLPPWRDQLTLRGVAVAAVLGSLLCVVIHRLNLTVGVIPALNVASGLLAFFLATAWRGAAAVLGLGHHRGRPFTRQENTVIQTCAIACGSLAFSGCSSSYIFAMDRKTYELVGQDYPGNRMEDIRDPSLGWMIGFMFLIALIGPFSIVMLRKVMVIDYKLAFPGGTATALMINSLHGKTEADLAGRKVHCLVKYMSLSFGWSFFKWFFSGVGDSCGFDNFPSFGIEAFKNTFYFNFNPSYVGYGLISPHIVNCSVFLGSVISWGFLWPFIAKQAGDWYPDNLSNTDFRGLYGYKVFIAISVILGDGLYNLVKVFLIIAKEICNARSKEHDLPVQALLQDDDSSRQLLDEKRQTEIFLKDSIPTWLAVSGYIVLAAISTVAVPIIFPQLKWYLVLVCYFLAPAIAFCNSYGMGLTNLNLAPTYGKIALFVFASLVGSDGGVIAGLAACGVIMSIVCSTADLMQDFKSGYLTLSSPRSMFISQMIGVALGCIIAPLTLWLFWTAFDIGDPDGEYKAPFAIIFREMAIIGIEGFAALPRHCLEICCVFFLAALIINLMKDVVPNHVSRFIPIPMAMAVPFYIGAYFGVDMFIGTLILFAWQKIDRREADDYAVAVASGLICGDGVWSIPSAVLSILGVDPPICMSFRPSSASV.

Positions 1–11 are enriched in low complexity; the sequence is MPPPETSSAAA. A disordered region spans residues 1–22; that stretch reads MPPPETSSAAAPSPPSPDPLPP. The segment covering 12–22 has biased composition (pro residues); it reads PSPPSPDPLPP. 14 helical membrane passes run 27–47, 51–71, 102–122, 147–167, 209–229, 268–288, 315–335, 383–403, 410–430, 443–463, 501–521, 557–577, 595–615, and 633–653; these read LTLR…VVIH, LTVG…FFLA, CAIA…IFAM, LGWM…SIVM, LVKY…FSGV, IVNC…WPFI, IAIS…FLII, LAVS…PIIF, LVLV…YGMG, IALF…AGLA, IGVA…WTAF, LEIC…KDVV, FYIG…LFAW, and GLIC…ILGV.

Belongs to the YSL (TC 2.A.67.2) family. In terms of tissue distribution, expressed in roots.

Its subcellular location is the membrane. In terms of biological role, may be involved in the transport of nicotianamine-chelated metals. The protein is Probable metal-nicotianamine transporter YSL5 (YSL5) of Oryza sativa subsp. japonica (Rice).